Reading from the N-terminus, the 382-residue chain is Alkanesulfonate monooxygenase (382 aa).

It belongs to the SsuD family. Homotetramer.

It catalyses the reaction an alkanesulfonate + FMNH2 + O2 = an aldehyde + FMN + sulfite + H2O + 2 H(+). Catalyzes the desulfonation of aliphatic sulfonates. This is Alkanesulfonate monooxygenase from Buttiauxella sp. (strain PNBS).